Here is a 244-residue protein sequence, read N- to C-terminus: tRNA (guanine-N(7)-)-methyltransferase (244 aa).

A disordered region spans residues 1–20 (MTNPFDSAGSKAPPKPFTVS). Residues Glu75, Glu100, Asp127, and Asp150 each contribute to the S-adenosyl-L-methionine site. The active site involves Asp150. Lys154 contributes to the substrate binding site. The interaction with RNA stretch occupies residues 156–161 (RHNKRR). Residues Asp186 and 223-226 (THFE) each bind substrate.

Belongs to the class I-like SAM-binding methyltransferase superfamily. TrmB family.

It carries out the reaction guanosine(46) in tRNA + S-adenosyl-L-methionine = N(7)-methylguanosine(46) in tRNA + S-adenosyl-L-homocysteine. It functions in the pathway tRNA modification; N(7)-methylguanine-tRNA biosynthesis. Functionally, catalyzes the formation of N(7)-methylguanine at position 46 (m7G46) in tRNA. In Stenotrophomonas maltophilia (strain K279a), this protein is tRNA (guanine-N(7)-)-methyltransferase.